The sequence spans 554 residues: Acetyl-S-ACP:malonate ACP transferase (554 aa).

It localises to the cytoplasm. It catalyses the reaction acetyl-[ACP] + malonate = malonyl-[ACP] + acetate. In terms of biological role, alpha subunit of the biotin-independent and biotin-dependent malonate decarboxylase multienzyme complex (EC 4.1.1.88 and EC 7.2.4.4, respectively). Acts as an acyl-carrier protein (ACP) transferase component. This first step in malonate decarboxylation involves the exchange of an acetyl thioester residue bound to the activated ACP subunit for a malonyl thioester residue. Has a weak activity with acetyl-CoA as substrate. This is Acetyl-S-ACP:malonate ACP transferase (madA) from Malonomonas rubra.